We begin with the raw amino-acid sequence, 89 residues long: Small ribosomal subunit protein uS15 (89 aa).

Belongs to the universal ribosomal protein uS15 family. Part of the 30S ribosomal subunit. Forms a bridge to the 50S subunit in the 70S ribosome, contacting the 23S rRNA.

Functionally, one of the primary rRNA binding proteins, it binds directly to 16S rRNA where it helps nucleate assembly of the platform of the 30S subunit by binding and bridging several RNA helices of the 16S rRNA. Its function is as follows. Forms an intersubunit bridge (bridge B4) with the 23S rRNA of the 50S subunit in the ribosome. This chain is Small ribosomal subunit protein uS15, found in Marinobacter nauticus (strain ATCC 700491 / DSM 11845 / VT8) (Marinobacter aquaeolei).